A 535-amino-acid polypeptide reads, in one-letter code: Dipeptide-binding protein (535 aa).

The first 28 residues, 1 to 28 (MRISLKKSGMLKLGLSLVAMTVAASVQA), serve as a signal peptide directing secretion. Cysteines 34 and 262 form a disulfide. Glycyl-L-leucine-binding positions include 48–50 (TSG), 383–385 (RPY), and 433–436 (WTGD). Cys-450 and Cys-463 are joined by a disulfide.

It belongs to the bacterial solute-binding protein 5 family. As to quaternary structure, the complex is composed of two ATP-binding proteins (DppD and DppF), two transmembrane proteins (DppB and DppC) and a solute-binding protein (DppA).

It localises to the periplasm. With respect to regulation, heme binding is inhibited by dipeptide. Functionally, part of the ABC transporter DppABCDF involved in dipeptide transport. Binds dipeptides and accepts a wide range of side chains, including small neutral, bulky hydrophobic, and positively and negatively charged groups. Tripeptides are poor substrates. DppA alone controls the specificity of the Dpp transporter. In addition, plays a role in chemotaxis toward peptides via interaction with the chemotaxis protein Tap. Binds heme. When a foreign outer membrane heme receptor is expressed in E.coli, DppABCDF can also transport heme and its precursor, 5-aminolevulinic acid (ALA), from the periplasm into the cytoplasm. In Escherichia coli (strain K12), this protein is Dipeptide-binding protein.